The sequence spans 159 residues: Transcription elongation factor GreA (159 aa).

A coiled-coil region spans residues 43–75 (LSENAEYDAAREEQSQLEAKIGEIENKLASATI).

Belongs to the GreA/GreB family.

Its function is as follows. Necessary for efficient RNA polymerase transcription elongation past template-encoded arresting sites. The arresting sites in DNA have the property of trapping a certain fraction of elongating RNA polymerases that pass through, resulting in locked ternary complexes. Cleavage of the nascent transcript by cleavage factors such as GreA or GreB allows the resumption of elongation from the new 3'terminus. GreA releases sequences of 2 to 3 nucleotides. This chain is Transcription elongation factor GreA, found in Chlorobaculum tepidum (strain ATCC 49652 / DSM 12025 / NBRC 103806 / TLS) (Chlorobium tepidum).